A 233-amino-acid chain; its full sequence is Metallo-beta-lactamase domain-containing protein 1 (233 aa).

Zn(2+) contacts are provided by His-96, His-98, Asp-100, His-101, His-152, Asp-174, and His-213.

The protein belongs to the metallo-beta-lactamase superfamily. Glyoxalase II family. As to quaternary structure, homodimer. The cofactor is Zn(2+).

It localises to the cytoplasm. Its subcellular location is the cytosol. The protein localises to the nucleus. The enzyme catalyses a ribonucleotidyl-ribonucleotide-RNA + H2O = a 3'-end ribonucleotide-RNA + a 5'-end 5'-phospho-ribonucleoside-RNA + H(+). In terms of biological role, endoribonuclease that catalyzes the hydrolysis of histone-coding pre-mRNA 3'-end. Involved in histone pre-mRNA processing during the S-phase of the cell cycle, which is required for entering/progressing through S-phase. Cleaves histone pre-mRNA at a major and a minor cleavage site after the 5'-ACCCA-3' and the 5'-ACCCACA-3' sequence, respectively, and located downstream of the stem-loop. May require the presence of the HDE element located at the histone pre-RNA 3'-end to avoid non-specific cleavage. This Xenopus laevis (African clawed frog) protein is Metallo-beta-lactamase domain-containing protein 1 (mblac1).